An 815-amino-acid chain; its full sequence is Cell division cycle protein 48 (815 aa).

The segment at 1-30 is disordered; it reads MNAPSTMTDKKPEVEHLQGENPPKDTYSAE. Over residues 8–18 the composition is skewed to basic and acidic residues; sequence TDKKPEVEHLQ. Residues 267-273, N368, H404, and 541-546 contribute to the ATP site; these read PGTGKTL and GTGKTL. The tract at residues 794-815 is disordered; that stretch reads DSADSNTNGPSFGNDGADDLYA. Polar residues predominate over residues 795-804; sequence SADSNTNGPS.

The protein belongs to the AAA ATPase family. In terms of assembly, component of the ribosome quality control complex (RQC), composed of the E3 ubiquitin ligase rkr1/ltn1, rqc1 and mtr1/rqc2, as well as cdc48 and its ubiquitin-binding cofactors. RQC forms a stable complex with 60S ribosomal subunits. Interacts with ubx2 and ubx3. Interacts with lub1. Interacts with rbd2 (via C-terminal SHP box); the interaction is required for rbd2-mediated cleavage of sre1 and sre2.

It is found in the cytoplasm. Its subcellular location is the nucleus. The catalysed reaction is ATP + H2O = ADP + phosphate + H(+). With respect to regulation, the first ATP-binding region has low ATPase activity. The second ATP-binding region is responsible for ATPase activity. ATP binding to the first ATP-binding region induces intrinsic activity of the second ATP-binding region. While ATP binding to the first ATP-binding region appears to prevent ATP hydrolysis by the second ATP-binding region, ADP-binding to first region promotes the coordinate and cooperative ATPase cycle of the second ATP-binding region. ATP binding to the first ATP-binding region induces a conformational change, promoting the rotation of the first ATP-binding region relative to the second ATP-binding region in the hexamer. ATP-dependent chaperone which probably uses the energy provided by ATP hydrolysis to generate mechanical force to unfold substrate proteins, disassemble protein complexes, and disaggregate protein aggregates. By recruiting and promoting the degradation of ubiquitinated proteins, plays a role in the ubiquitin fusion degradation (UFD) pathway. Has a role in the endoplasmic reticulum-associated degradation (ERAD) pathway which mediates the cytoplasmic elimination of misfolded proteins exported from the ER. Involved in spindle disassembly. Component of the ribosome quality control complex (RQC), a ribosome-associated complex that mediates ubiquitination and extraction of incompletely synthesized nascent chains for proteasomal degradation. CDC48 may provide the mechanical force that dislodges the polyubiquitinated nascent peptides from the exit channel. Required for ribophagy, a process which relocalizes ribosomal particles into the vacuole for degradation in response to starvation. Has a role in substrate recognition mediating rbd2-dependent cleavage of sterol regulatory element-binding protein sre1 and sre2. This chain is Cell division cycle protein 48, found in Schizosaccharomyces pombe (strain 972 / ATCC 24843) (Fission yeast).